The chain runs to 274 residues: Hydroxyethylthiazole kinase (274 aa).

Methionine 49 is a binding site for substrate. ATP contacts are provided by arginine 125 and threonine 173. Residue glycine 200 coordinates substrate.

The protein belongs to the Thz kinase family. Mg(2+) serves as cofactor.

It carries out the reaction 5-(2-hydroxyethyl)-4-methylthiazole + ATP = 4-methyl-5-(2-phosphooxyethyl)-thiazole + ADP + H(+). Its pathway is cofactor biosynthesis; thiamine diphosphate biosynthesis; 4-methyl-5-(2-phosphoethyl)-thiazole from 5-(2-hydroxyethyl)-4-methylthiazole: step 1/1. Catalyzes the phosphorylation of the hydroxyl group of 4-methyl-5-beta-hydroxyethylthiazole (THZ). This chain is Hydroxyethylthiazole kinase, found in Desulfosudis oleivorans (strain DSM 6200 / JCM 39069 / Hxd3) (Desulfococcus oleovorans).